We begin with the raw amino-acid sequence, 119 residues long: MTLRLKGNQAERYAEAFLAGHRLVLVQRNYRCRFGEIDLIMRDGETLVFVEVRMRTNRNFGDAGSSITLSKQRKVVRAARHYLLSLRTEPCCRFDAVLLSGNEGRDIEWIRNAFDVNYS.

This sequence belongs to the UPF0102 family.

The chain is UPF0102 protein Nmul_A0195 from Nitrosospira multiformis (strain ATCC 25196 / NCIMB 11849 / C 71).